Consider the following 755-residue polypeptide: Sentrin-specific protease 5 (755 aa).

The segment at 268–321 is disordered; sequence VQKVTGDHQETRRENGEGGSCSPFPSPEPKDPSCRHQPYFPDMDSSAVVKGTNS. Positions 272-283 are enriched in basic and acidic residues; the sequence is TGDHQETRRENG. Residues 567 to 724 are protease; that stretch reads HMLDMDDLAT…VFVLQYCKCL (158 aa). Active-site residues include H646, D663, and C713.

Belongs to the peptidase C48 family. As to quaternary structure, interacts with CCAR2.

Its subcellular location is the nucleus. It localises to the nucleolus. In terms of biological role, protease that catalyzes two essential functions in the SUMO pathway: processing of full-length SUMO3 to its mature form and deconjugation of SUMO2 and SUMO3 from targeted proteins. Has weak proteolytic activity against full-length SUMO1 or SUMO1 conjugates. Required for cell division. The chain is Sentrin-specific protease 5 (SENP5) from Homo sapiens (Human).